Here is a 263-residue protein sequence, read N- to C-terminus: 3-methyl-2-oxobutanoate hydroxymethyltransferase (263 aa).

Residues aspartate 45 and aspartate 84 each contribute to the Mg(2+) site. 3-methyl-2-oxobutanoate-binding positions include 45 to 46 (DS), aspartate 84, and lysine 112. Mg(2+) is bound at residue glutamate 114. The active-site Proton acceptor is glutamate 181.

The protein belongs to the PanB family. In terms of assembly, homodecamer; pentamer of dimers. Requires Mg(2+) as cofactor.

The protein resides in the cytoplasm. It carries out the reaction 3-methyl-2-oxobutanoate + (6R)-5,10-methylene-5,6,7,8-tetrahydrofolate + H2O = 2-dehydropantoate + (6S)-5,6,7,8-tetrahydrofolate. The protein operates within cofactor biosynthesis; (R)-pantothenate biosynthesis; (R)-pantoate from 3-methyl-2-oxobutanoate: step 1/2. In terms of biological role, catalyzes the reversible reaction in which hydroxymethyl group from 5,10-methylenetetrahydrofolate is transferred onto alpha-ketoisovalerate to form ketopantoate. This is 3-methyl-2-oxobutanoate hydroxymethyltransferase from Proteus mirabilis (strain HI4320).